Reading from the N-terminus, the 95-residue chain is Putative RelE-like toxin protein (95 aa).

This sequence belongs to the RelE toxin family.

Its function is as follows. Toxic component of a type II toxin-antitoxin (TA) system. The polypeptide is Putative RelE-like toxin protein (Escherichia coli).